The following is a 205-amino-acid chain: Octanoyltransferase (205 aa).

The BPL/LPL catalytic domain occupies 30–205 (NLSDELVWLL…ILKQEFHKIF (176 aa)). Residues 68-75 (RGGKYTYH), 140-142 (AFG), and 153-155 (GIA) each bind substrate. The active-site Acyl-thioester intermediate is the C171.

It belongs to the LipB family.

The protein resides in the cytoplasm. The enzyme catalyses octanoyl-[ACP] + L-lysyl-[protein] = N(6)-octanoyl-L-lysyl-[protein] + holo-[ACP] + H(+). The protein operates within protein modification; protein lipoylation via endogenous pathway; protein N(6)-(lipoyl)lysine from octanoyl-[acyl-carrier-protein]: step 1/2. Functionally, catalyzes the transfer of endogenously produced octanoic acid from octanoyl-acyl-carrier-protein onto the lipoyl domains of lipoate-dependent enzymes. Lipoyl-ACP can also act as a substrate although octanoyl-ACP is likely to be the physiological substrate. This is Octanoyltransferase from Wolbachia pipientis subsp. Culex pipiens (strain wPip).